We begin with the raw amino-acid sequence, 266 residues long: Receptor-like protein 5 (266 aa).

The signal sequence occupies residues 1–19 (MINYRHIVFCLCVMVVVDS). The Extracellular segment spans residues 20 to 169 (RLTPYLAAIE…PTRNKNKPTV (150 aa)). LRR repeat units follow at residues 93–117 (LTSL…ITKL) and 119–143 (NLTI…IVIL). N-linked (GlcNAc...) asparagine glycosylation occurs at Asn-119. The helical transmembrane segment at 170-190 (LVLLLGILVGLVVAGGASFGF) threads the bilayer. Topologically, residues 191–266 (YLYRIRKQPK…TNQNPHLPYM (76 aa)) are cytoplasmic.

This sequence belongs to the RLP family.

The protein resides in the cell membrane. The polypeptide is Receptor-like protein 5 (Arabidopsis thaliana (Mouse-ear cress)).